Consider the following 362-residue polypeptide: Protein U8 (362 aa).

The protein belongs to the herpesviridae US22 family.

This is Protein U8 (U8) from Human herpesvirus 7 (strain JI) (HHV-7).